A 364-amino-acid chain; its full sequence is DNA replication and repair protein RecF (364 aa).

30-37 (GKNAQGKT) contacts ATP.

It belongs to the RecF family.

The protein localises to the cytoplasm. In terms of biological role, the RecF protein is involved in DNA metabolism; it is required for DNA replication and normal SOS inducibility. RecF binds preferentially to single-stranded, linear DNA. It also seems to bind ATP. The polypeptide is DNA replication and repair protein RecF (Geotalea uraniireducens (strain Rf4) (Geobacter uraniireducens)).